A 275-amino-acid polypeptide reads, in one-letter code: Tryptophan synthase alpha chain (275 aa).

Active-site proton acceptor residues include Glu60 and Asp71.

This sequence belongs to the TrpA family. In terms of assembly, tetramer of two alpha and two beta chains.

The enzyme catalyses (1S,2R)-1-C-(indol-3-yl)glycerol 3-phosphate + L-serine = D-glyceraldehyde 3-phosphate + L-tryptophan + H2O. It functions in the pathway amino-acid biosynthesis; L-tryptophan biosynthesis; L-tryptophan from chorismate: step 5/5. Its function is as follows. The alpha subunit is responsible for the aldol cleavage of indoleglycerol phosphate to indole and glyceraldehyde 3-phosphate. The protein is Tryptophan synthase alpha chain of Prochlorococcus marinus (strain MIT 9313).